We begin with the raw amino-acid sequence, 314 residues long: PDZ domain-containing protein GIPC2 (314 aa).

Positions 1–12 are enriched in basic residues; that stretch reads MPLGLRGKKKAA. The interval 1-36 is disordered; that stretch reads MPLGLRGKKKAAKSKEAARLVEGERSSGSQGVPGPP. The segment covering 13–25 has biased composition (basic and acidic residues); it reads KSKEAARLVEGER. Residues 117–197 form the PDZ domain; it reads EVNVYKSEDS…EELFTLQLIE (81 aa).

The protein belongs to the GIPC family. Probably interacts with SEMA5A. As to expression, expressed in kidney and lung (at protein level).

Its subcellular location is the cytoplasm. In Mus musculus (Mouse), this protein is PDZ domain-containing protein GIPC2 (Gipc2).